Here is an 804-residue protein sequence, read N- to C-terminus: Endoplasmin (804 aa).

The signal sequence occupies residues 1–21 (MRVLWVLGLCCVLLTFGFVRA). An SRT pseudosubstrate motif motif is present at residues 42–44 (SRT). Asn62 carries an N-linked (GlcNAc...) asparagine glycan. Ser64 is subject to Phosphoserine. An N-linked (GlcNAc...) asparagine glycan is attached at Asn107. ATP-binding residues include Asn107, Asp149, and Asn162. Residue Lys168 is modified to N6-(2-hydroxyisobutyryl)lysine. Ser172 is subject to Phosphoserine. Phe199 provides a ligand contact to ATP. Asn217 carries N-linked (GlcNAc...) asparagine glycosylation. Residues 288-323 (TVEEPLEEDETAQEEKEEADDEAAVEEEEEEKKPKT) form a disordered region. The span at 289 to 317 (VEEPLEEDETAQEEKEEADDEAAVEEEEE) shows a compositional bias: acidic residues. Ser403 bears the Phosphoserine mark. Lys404 is subject to N6-succinyllysine. The N-linked (GlcNAc...) asparagine glycan is linked to Asn445. Residue Ser447 is modified to Phosphoserine. Lys479 is modified (N6-acetyllysine). Asn481 and Asn502 each carry an N-linked (GlcNAc...) asparagine glycan. Lys633 bears the N6-succinyllysine mark. The segment at 749-804 (IDPEAQVEEEPEEEPEDTTEDTTDDSEQDEEETDAGAEEEEEEQETEKEPTEKDEL) is disordered. Residues 753 to 794 (AQVEEEPEEEPEDTTEDTTDDSEQDEEETDAGAEEEEEEQET) are compositionally biased toward acidic residues. The span at 795–804 (EKEPTEKDEL) shows a compositional bias: basic and acidic residues. The short motif at 801 to 804 (KDEL) is the Prevents secretion from ER element.

Belongs to the heat shock protein 90 family. As to quaternary structure, homodimer; disulfide-linked. Component of an EIF2 complex at least composed of CELF1/CUGBP1, CALR, CALR3, EIF2S1, EIF2S2, HSP90B1 and HSPA5. Part of a large chaperone multiprotein complex comprising DNAJB11, HSP90B1, HSPA5, HYOU, PDIA2, PDIA4, PDIA6, PPIB, SDF2L1, UGGT1 and very small amounts of ERP29, but not, or at very low levels, CALR nor CANX. Interacts with AIMP1; regulates its retention in the endoplasmic reticulum. Hyperglycosylated form interacts with OS9; promoting its degradation by the endoplasmic reticulum associated degradation (ERAD). Interacts with CNPY3. This interaction is disrupted in the presence of ATP. Interacts with TLR4 and TLR9, but not with TLR3. Interacts with MZB1 in a calcium-dependent manner. Interacts with METTL23. Interacts with IL1B; the interaction facilitates cargo translocation into the ERGIC. Interacts with EIF2AK3. Phosphorylated by CK2. In terms of processing, N-glycosylated cotranslationally at Asn-217 by STT3A-containing OST-A complex: this glycosylation is constitutive. In response to various stress, 5 additional facultative sites (Asn-62, Asn-107, Asn-445, Asn-481 and Asn-502) can be glycosylated post-translationally by STT3B-containing OST-B complex, leading to a hyperglycosylated form that is degraded by the ER-associated degradation (ERAD) pathway. In normal conditions, the OST-A complex together with CCDC134 prevent glycosylation at facultative sites during protein folding, thereby preventing hyperglycosylation. Mechanistically, nascent HSP90B1 is tethered during translation to a specialized CCDC134-containing translocon that forms a microenvironment for its folding, in which STT3A associates with the SRT pseudosubstrate motif, and prevents access to facultative glycosylation sites until folding is completed, rendering its facultative sites inaccessible to the OST-B complex.

It localises to the endoplasmic reticulum lumen. Its subcellular location is the sarcoplasmic reticulum lumen. It is found in the melanosome. It catalyses the reaction ATP + H2O = ADP + phosphate + H(+). Its function is as follows. ATP-dependent chaperone involved in the processing of proteins in the endoplasmic reticulum, regulating their transport. Together with MESD, acts as a modulator of the Wnt pathway by promoting the folding of LRP6, a coreceptor of the canonical Wnt pathway. When associated with CNPY3, required for proper folding of Toll-like receptors. Promotes folding and trafficking of TLR4 to the cell surface. May participate in the unfolding of cytosolic leaderless cargos (lacking the secretion signal sequence) such as the interleukin 1/IL-1 to facilitate their translocation into the ERGIC (endoplasmic reticulum-Golgi intermediate compartment) and secretion; the translocation process is mediated by the cargo receptor TMED10. The protein is Endoplasmin of Rattus norvegicus (Rat).